A 514-amino-acid chain; its full sequence is Serine--tRNA ligase, cytoplasmic (514 aa).

The residue at position 1 (Met-1) is an N-acetylmethionine. Residues 9–61 form an interaction with tRNA region; it reads RVDKGGDPALIRESQEKRFKDPGLVDQLVKADSEWRRCRFRADNLNKLKNLCS. Phosphoserine is present on Ser-241. Residues Thr-271 and Arg-302 each contribute to the L-serine site. ATP contacts are provided by residues 302 to 304 and 318 to 321; these read RQE and VHQF. Lys-323 is subject to N6-acetyllysine. Glu-325 is a binding site for L-serine. Position 391 to 394 (391 to 394) interacts with ATP; that stretch reads ELVS. Asn-427 serves as a coordination point for L-serine. Positions 475-514 are disordered; sequence PIDQEPSKKQKKQHEGSKKKGAARDVALESQLQNMEVTDA. Over residues 479-501 the composition is skewed to basic and acidic residues; the sequence is EPSKKQKKQHEGSKKKGAARDVA. The Nuclear localization signal signature appears at 482-494; sequence KKQKKQHEGSKKK. The segment covering 504–514 has biased composition (polar residues); it reads SQLQNMEVTDA.

This sequence belongs to the class-II aminoacyl-tRNA synthetase family. Type-1 seryl-tRNA synthetase subfamily. Homodimer. The tRNA molecule may bind across the dimer. Interacts with SIRT2. Interacts with METTL6; interaction is required for the tRNA N(3)-methylcytidine methyltransferase activity of METTL6.

The protein resides in the cytoplasm. It localises to the nucleus. It carries out the reaction tRNA(Ser) + L-serine + ATP = L-seryl-tRNA(Ser) + AMP + diphosphate + H(+). It catalyses the reaction tRNA(Sec) + L-serine + ATP = L-seryl-tRNA(Sec) + AMP + diphosphate + H(+). The protein operates within aminoacyl-tRNA biosynthesis; selenocysteinyl-tRNA(Sec) biosynthesis; L-seryl-tRNA(Sec) from L-serine and tRNA(Sec): step 1/1. Catalyzes the attachment of serine to tRNA(Ser) in a two-step reaction: serine is first activated by ATP to form Ser-AMP and then transferred to the acceptor end of tRNA(Ser). Is probably also able to aminoacylate tRNA(Sec) with serine, to form the misacylated tRNA L-seryl-tRNA(Sec), which will be further converted into selenocysteinyl-tRNA(Sec). In the nucleus, binds to the VEGFA core promoter and prevents MYC binding and transcriptional activation by MYC. Recruits SIRT2 to the VEGFA promoter, promoting deacetylation of histone H4 at 'Lys-16' (H4K16). Thereby, inhibits the production of VEGFA and sprouting angiogenesis mediated by VEGFA. This chain is Serine--tRNA ligase, cytoplasmic (SARS1), found in Bos taurus (Bovine).